The primary structure comprises 169 residues: Phosphopantetheine adenylyltransferase (169 aa).

A substrate-binding site is contributed by S8. ATP is bound by residues 8–9 (SF) and H16. Positions 40, 72, and 86 each coordinate substrate. Residues 87–89 (GLR), E97, and 122–128 (YSFLSSS) contribute to the ATP site.

Belongs to the bacterial CoaD family. In terms of assembly, homohexamer. Mg(2+) serves as cofactor.

The protein localises to the cytoplasm. The catalysed reaction is (R)-4'-phosphopantetheine + ATP + H(+) = 3'-dephospho-CoA + diphosphate. It participates in cofactor biosynthesis; coenzyme A biosynthesis; CoA from (R)-pantothenate: step 4/5. Reversibly transfers an adenylyl group from ATP to 4'-phosphopantetheine, yielding dephospho-CoA (dPCoA) and pyrophosphate. The polypeptide is Phosphopantetheine adenylyltransferase (Cyanothece sp. (strain PCC 7425 / ATCC 29141)).